The chain runs to 336 residues: tRNA(Ile)-lysidine synthase (336 aa).

An ATP-binding site is contributed by 21–26; the sequence is SGGLDS.

This sequence belongs to the tRNA(Ile)-lysidine synthase family.

The protein resides in the cytoplasm. The enzyme catalyses cytidine(34) in tRNA(Ile2) + L-lysine + ATP = lysidine(34) in tRNA(Ile2) + AMP + diphosphate + H(+). Its function is as follows. Ligates lysine onto the cytidine present at position 34 of the AUA codon-specific tRNA(Ile) that contains the anticodon CAU, in an ATP-dependent manner. Cytidine is converted to lysidine, thus changing the amino acid specificity of the tRNA from methionine to isoleucine. This is tRNA(Ile)-lysidine synthase from Helicobacter pylori (strain ATCC 700392 / 26695) (Campylobacter pylori).